A 133-amino-acid polypeptide reads, in one-letter code: DNA-directed RNA polymerases I and III subunit RPAC2 (133 aa).

M1 bears the N-acetylmethionine mark. The interval 1–22 (MEEDQELERKMSGVKTSMAEGE) is disordered.

This sequence belongs to the archaeal Rpo11/eukaryotic RPB11/RPC19 RNA polymerase subunit family. In terms of assembly, component of the RNA polymerase I and RNA polymerase III complexes consisting of at least 13 and 17 subunits, respectively. The transcriptionally active RNA polymerase III complex consists of a ten-subunit horseshoe-shaped catalytic core composed of POLR3A/RPC1, POLR3B/RPC2, POLR1C/RPAC1, POLR1D/RPAC2, POLR3K/RPC10, POLR2E/RPABC1, POLR2F/RPABC2, POLR2H/RPABC3, POLR2K/RPABC4 and POLR2L/RPABC5; a mobile stalk composed of two subunits POLR3H/RPC8 and CRCP/RPC9, protruding from the core and functioning primarily in transcription initiation; and additional subunits homologous to general transcription factors of the RNA polymerase II machinery, POLR3C/RPC3-POLR3F/RPC6-POLR3G/RPC7 heterotrimer required for transcription initiation and POLR3D/RPC4-POLR3E/RPC5 heterodimer involved in both transcription initiation and termination.

The protein localises to the nucleus. In terms of biological role, DNA-dependent RNA polymerase catalyzes the transcription of DNA into RNA using the four ribonucleoside triphosphates as substrates. Common component of RNA polymerases I and III which synthesize ribosomal RNA precursor pre-rRNA and short non-coding RNAs including 5S rRNA, snRNAs, tRNAs and miRNAs, respectively. The sequence is that of DNA-directed RNA polymerases I and III subunit RPAC2 (POLR1D) from Bos taurus (Bovine).